The following is a 610-amino-acid chain: Zinc metalloproteinase-disintegrin-like 4a (610 aa).

A signal peptide spans 1–20; the sequence is MIQVLLVTISLAVFPYQGSS. The propeptide occupies 21 to 189; it reads VILESGNVND…KKASQSNLTP (169 aa). The Peptidase M12B domain maps to 199–395; it reads KYVKLFLVAD…NMPQCILKKP (197 aa). The N-linked (GlcNAc...) asparagine glycan is linked to Asn-218. Ca(2+) is bound at residue Asp-286. Disulfide bonds link Cys-310–Cys-390, Cys-350–Cys-374, and Cys-352–Cys-357. Zn(2+) is bound at residue His-335. Glu-336 is an active-site residue. Zn(2+) contacts are provided by His-339 and His-345. Cys-390, Val-405, Asn-408, Phe-410, Glu-412, Glu-415, and Asp-418 together coordinate Ca(2+). Residues 403 to 488 form the Disintegrin domain; the sequence is PAVCGNYFVE…AECTDSFQRN (86 aa). Disulfide bonds link Cys-406–Cys-435, Cys-417–Cys-430, Cys-419–Cys-425, Cys-429–Cys-452, Cys-443–Cys-449, Cys-448–Cys-474, Cys-461–Cys-481, Cys-468–Cys-499, Cys-492–Cys-504, Cys-511–Cys-561, Cys-526–Cys-572, Cys-539–Cys-549, Cys-556–Cys-598, and Cys-592–Cys-603. Positions 467-469 match the D/ECD-tripeptide motif; it reads ECD.

The protein belongs to the venom metalloproteinase (M12B) family. P-III subfamily. Zn(2+) is required as a cofactor. In terms of tissue distribution, expressed by the venom gland.

Its subcellular location is the secreted. Snake venom metalloproteinase that impairs hemostasis in the envenomed animal. The sequence is that of Zinc metalloproteinase-disintegrin-like 4a from Crotalus adamanteus (Eastern diamondback rattlesnake).